The following is a 645-amino-acid chain: UPF0313 protein CLK_3381 (645 aa).

The Radical SAM core domain occupies 295–566 (AIKEVKFSIT…RMQRALLQFS (272 aa)). [4Fe-4S] cluster-binding residues include cysteine 309, cysteine 313, and cysteine 316. Residues 598–645 (NKPYKKSHKKNNVKNNNNHYNKNNNYNKNKDVSKKNKKNSLSKHKKRK) are disordered. Over residues 600–609 (PYKKSHKKNN) the composition is skewed to basic residues. Positions 610–624 (VKNNNNHYNKNNNYN) are enriched in low complexity. Positions 632–645 (KNKKNSLSKHKKRK) are enriched in basic residues.

It belongs to the UPF0313 family. The cofactor is [4Fe-4S] cluster.

The polypeptide is UPF0313 protein CLK_3381 (Clostridium botulinum (strain Loch Maree / Type A3)).